Reading from the N-terminus, the 237-residue chain is Uridylate kinase (237 aa).

9-12 provides a ligand contact to ATP; the sequence is KLSG. Residues 17 to 22 are involved in allosteric activation by GTP; that stretch reads GTQGYG. G51 is a UMP binding site. Positions 52 and 56 each coordinate ATP. UMP is bound by residues D71 and 132–139; that span reads CGNPFFTT. 3 residues coordinate ATP: T159, Y165, and D168.

The protein belongs to the UMP kinase family. Homohexamer.

It is found in the cytoplasm. The catalysed reaction is UMP + ATP = UDP + ADP. It participates in pyrimidine metabolism; CTP biosynthesis via de novo pathway; UDP from UMP (UMPK route): step 1/1. Allosterically activated by GTP. Inhibited by UTP. In terms of biological role, catalyzes the reversible phosphorylation of UMP to UDP. In Parasynechococcus marenigrum (strain WH8102), this protein is Uridylate kinase.